The chain runs to 267 residues: 4-hydroxy-tetrahydrodipicolinate reductase (267 aa).

NAD(+) contacts are provided by residues 8 to 13 (GAAGRM) and aspartate 34. Residue arginine 35 participates in NADP(+) binding. NAD(+)-binding positions include 98–100 (GTT) and 122–125 (AANF). The active-site Proton donor/acceptor is histidine 155. Histidine 156 lines the (S)-2,3,4,5-tetrahydrodipicolinate pocket. The active-site Proton donor is the lysine 159. A (S)-2,3,4,5-tetrahydrodipicolinate-binding site is contributed by 165–166 (GT).

The protein belongs to the DapB family.

The protein localises to the cytoplasm. The enzyme catalyses (S)-2,3,4,5-tetrahydrodipicolinate + NAD(+) + H2O = (2S,4S)-4-hydroxy-2,3,4,5-tetrahydrodipicolinate + NADH + H(+). The catalysed reaction is (S)-2,3,4,5-tetrahydrodipicolinate + NADP(+) + H2O = (2S,4S)-4-hydroxy-2,3,4,5-tetrahydrodipicolinate + NADPH + H(+). Its pathway is amino-acid biosynthesis; L-lysine biosynthesis via DAP pathway; (S)-tetrahydrodipicolinate from L-aspartate: step 4/4. Its function is as follows. Catalyzes the conversion of 4-hydroxy-tetrahydrodipicolinate (HTPA) to tetrahydrodipicolinate. This Ectopseudomonas mendocina (strain ymp) (Pseudomonas mendocina) protein is 4-hydroxy-tetrahydrodipicolinate reductase.